The primary structure comprises 475 residues: Ribulose bisphosphate carboxylase large chain (475 aa).

A propeptide spanning residues 1–2 (MS) is cleaved from the precursor. Residue Pro3 is modified to N-acetylproline. Lys14 is modified (N6,N6,N6-trimethyllysine). Residues Asn123 and Thr173 each coordinate substrate. Lys175 serves as the catalytic Proton acceptor. Substrate is bound at residue Lys177. Residues Lys201, Asp203, and Glu204 each coordinate Mg(2+). Position 201 is an N6-carboxylysine (Lys201). His294 functions as the Proton acceptor in the catalytic mechanism. Substrate contacts are provided by Arg295, His327, and Ser379.

The protein belongs to the RuBisCO large chain family. Type I subfamily. In terms of assembly, heterohexadecamer of 8 large chains and 8 small chains; disulfide-linked. The disulfide link is formed within the large subunit homodimers. It depends on Mg(2+) as a cofactor. The disulfide bond which can form in the large chain dimeric partners within the hexadecamer appears to be associated with oxidative stress and protein turnover.

The protein localises to the plastid. Its subcellular location is the chloroplast. The enzyme catalyses 2 (2R)-3-phosphoglycerate + 2 H(+) = D-ribulose 1,5-bisphosphate + CO2 + H2O. It carries out the reaction D-ribulose 1,5-bisphosphate + O2 = 2-phosphoglycolate + (2R)-3-phosphoglycerate + 2 H(+). In terms of biological role, ruBisCO catalyzes two reactions: the carboxylation of D-ribulose 1,5-bisphosphate, the primary event in carbon dioxide fixation, as well as the oxidative fragmentation of the pentose substrate in the photorespiration process. Both reactions occur simultaneously and in competition at the same active site. The polypeptide is Ribulose bisphosphate carboxylase large chain (rbcL) (Marchantia polymorpha (Common liverwort)).